We begin with the raw amino-acid sequence, 243 residues long: DNA repair protein RecO (243 aa).

The protein belongs to the RecO family.

In terms of biological role, involved in DNA repair and RecF pathway recombination. This Phenylobacterium zucineum (strain HLK1) protein is DNA repair protein RecO.